A 127-amino-acid chain; its full sequence is uncharacterized protein (127 aa).

An N-terminal signal peptide occupies residues 1–23; sequence MAGVRARAPLPLALLLSLPAAPG. The segment at 43–127 is disordered; sequence CFEVGLRKPP…ACPPRAPLWR (85 aa). The span at 59–70 shows a compositional bias: low complexity; that stretch reads PPSFSSGSSRPL.

The protein localises to the secreted. This is an uncharacterized protein from Homo sapiens (Human).